Consider the following 73-residue polypeptide: UPF0235 protein HY04AAS1_1378 (73 aa).

It belongs to the UPF0235 family.

The sequence is that of UPF0235 protein HY04AAS1_1378 from Hydrogenobaculum sp. (strain Y04AAS1).